The chain runs to 473 residues: H(+)/Cl(-) exchange transporter ClcA (473 aa).

The Cytoplasmic segment spans residues 1–32 (MKTDTSTFLAQQIVRLRRRDQIRRLMQRDKTP). A helical membrane pass occupies residues 33–69 (LAILLMAAVVGTLTGLVGVAFEKAVSWVQNMRIGALV). Over 70–76 (QVADHAF) the chain is Periplasmic. The chain crosses the membrane as a helical span at residues 77 to 100 (LLWPLAFILSALLAMVGYFLVRKF). The short motif at 106-110 (GSGIP) is the Selectivity filter part_1 element. S107 provides a ligand contact to chloride. Residues 109–116 (IPEIEGAL) constitute an intramembrane region (helical). The Cytoplasmic segment spans residues 117-123 (EELRPVR). The next 2 membrane-spanning stretches (helical) occupy residues 124–141 (WWRVLPVKFIGGMGTLGA) and 148–166 (EGPTVQIGGNLGRMVLDVF). The Selectivity filter part_2 motif lies at 146–150 (GREGP). Residues 167 to 176 (RMRSAEARHT) are Cytoplasmic-facing. 2 consecutive intramembrane regions (helical) follow at residues 177–189 (LLATGAAAGLSAA) and 193–201 (PLAGILFII). Residues 202–214 (EEMRPQFRYNLIS) lie on the Cytoplasmic side of the membrane. A helical membrane pass occupies residues 215-232 (IKAVFTGVIMSSIVFRIF). The Periplasmic portion of the chain corresponds to 233–252 (NGEAPIIEVGKLSDAPVNTL). The chain crosses the membrane as a helical span at residues 253–281 (WLYLILGIIFGCVGPVFNSLVLRTQDMFQ). At 282–287 (RFHGGE) the chain is on the cytoplasmic side. The helical transmembrane segment at 288-309 (IKKWVLMGGAIGGLCGILGLIE) threads the bilayer. Topologically, residues 310–329 (PEAAGGGFNLIPIAAAGNFS) are periplasmic. Transmembrane regions (helical) follow at residues 330 to 349 (VGLLLFIFITRVVTTLLCFS) and 355 to 376 (GIFAPMLALGTLLGTAFGMAAA). The Selectivity filter part_3 signature appears at 355–359 (GIFAP). Residues I356 and F357 each contribute to the chloride site. The Periplasmic segment spans residues 377-386 (VLFPQYHLEA). Positions 387 to 401 (GTFAIAGMGALMAAS) form an intramembrane region, helical. The segment at residues 402–404 (VRA) is an intramembrane region (note=Loop between two helices). The helical intramembrane region spans 405 to 416 (PLTGIVLVLEMT). The note=Loop between two helices intramembrane region spans 417–421 (DNYQL). A helical membrane pass occupies residues 422-438 (ILPMIITCLGATLLAQF). The Cytoplasmic segment spans residues 439-473 (LGGKPLYSTILARTLAKQDAEQAAKNQNAPAGENT). Y445 provides a ligand contact to chloride.

It belongs to the chloride channel (TC 2.A.49) family. ClcA subfamily. Homodimer.

The protein resides in the cell inner membrane. The catalysed reaction is 2 chloride(in) + H(+)(out) = 2 chloride(out) + H(+)(in). Proton-coupled chloride transporter. Functions as antiport system and exchanges two chloride ions for 1 proton. Probably acts as an electrical shunt for an outwardly-directed proton pump that is linked to amino acid decarboxylation, as part of the extreme acid resistance (XAR) response. This chain is H(+)/Cl(-) exchange transporter ClcA, found in Salmonella newport (strain SL254).